The primary structure comprises 486 residues: UDP-N-acetylmuramate--L-alanine ligase (486 aa).

129–135 (GTHGKTT) is an ATP binding site.

This sequence belongs to the MurCDEF family.

The protein resides in the cytoplasm. The enzyme catalyses UDP-N-acetyl-alpha-D-muramate + L-alanine + ATP = UDP-N-acetyl-alpha-D-muramoyl-L-alanine + ADP + phosphate + H(+). Its pathway is cell wall biogenesis; peptidoglycan biosynthesis. In terms of biological role, cell wall formation. The chain is UDP-N-acetylmuramate--L-alanine ligase from Vibrio vulnificus (strain CMCP6).